A 471-amino-acid chain; its full sequence is ATP synthase subunit beta (471 aa).

154-161 contacts ATP; the sequence is GGAGVGKT.

The protein belongs to the ATPase alpha/beta chains family. In terms of assembly, F-type ATPases have 2 components, CF(1) - the catalytic core - and CF(0) - the membrane proton channel. CF(1) has five subunits: alpha(3), beta(3), gamma(1), delta(1), epsilon(1). CF(0) has three main subunits: a(1), b(2) and c(9-12). The alpha and beta chains form an alternating ring which encloses part of the gamma chain. CF(1) is attached to CF(0) by a central stalk formed by the gamma and epsilon chains, while a peripheral stalk is formed by the delta and b chains.

Its subcellular location is the cell membrane. The catalysed reaction is ATP + H2O + 4 H(+)(in) = ADP + phosphate + 5 H(+)(out). Produces ATP from ADP in the presence of a proton gradient across the membrane. The catalytic sites are hosted primarily by the beta subunits. In Mesomycoplasma hyopneumoniae (strain 7448) (Mycoplasma hyopneumoniae), this protein is ATP synthase subunit beta.